A 299-amino-acid chain; its full sequence is Secreted LysM effector ldpB (299 aa).

A signal peptide spans 1 to 19; sequence MGLTSILIAQVLFLGAANS. LysM domains are found at residues 46–91, 135–182, and 211–258; these read WVND…SYCV, AFYK…YVCI, and KYHK…YVCV. N154 carries an N-linked (GlcNAc...) asparagine glycan. Positions 266–283 are enriched in low complexity; that stretch reads ATATPQPTPQPQQSSSPD. The tract at residues 266–288 is disordered; the sequence is ATATPQPTPQPQQSSSPDQPMPQ.

It belongs to the secreted LysM effector family.

It is found in the secreted. The protein localises to the cell wall. It localises to the extracellular space. Its subcellular location is the extracellular matrix. Functionally, cell wall chitin of A.fumigatus recruits lung eosinophils during infection and ldpB might have a role in sequestration of chitin and act as triggers of host immunity to dampen host defense. The protein is Secreted LysM effector ldpB of Aspergillus fumigatus (strain ATCC MYA-4609 / CBS 101355 / FGSC A1100 / Af293) (Neosartorya fumigata).